An 85-amino-acid chain; its full sequence is Arminin 6494 (85 aa).

Residues 1 to 18 (MKTVFAILFLAFIALTYA) form the signal peptide. A propeptide spanning residues 19-57 (RSYEDVKEEIKNEVEKEILEDLEEESDELNDKRKEINDA) is cleaved from the precursor. Alanine 82 is subject to Alanine amide.

This sequence belongs to the arminin family. As to expression, expressed in entodermal epithelium along the body column.

The protein resides in the secreted. The protein localises to the target cell membrane. Antimicrobial peptide with a broad-spectrum antimicrobial activity. Keeps its antibacterial activity under a wide range of salt concentrations that mimic physiological conditions of human blood, which is surprising, since Hydra is an obligate freshwater animal with nearly no salt tolerance. Does not affect red blood cells. The sequence is that of Arminin 6494 from Hydra vulgaris (Hydra).